A 259-amino-acid chain; its full sequence is 3-dehydroquinate dehydratase (259 aa).

3-dehydroquinate is bound by residues 50–52 and Arg86; that span reads EWR. His147 serves as the catalytic Proton donor/acceptor. The active-site Schiff-base intermediate with substrate is Lys174. 3-dehydroquinate contacts are provided by Arg216, Ser235, and Gln239.

It belongs to the type-I 3-dehydroquinase family. In terms of assembly, homodimer.

It catalyses the reaction 3-dehydroquinate = 3-dehydroshikimate + H2O. Its pathway is metabolic intermediate biosynthesis; chorismate biosynthesis; chorismate from D-erythrose 4-phosphate and phosphoenolpyruvate: step 3/7. Involved in the third step of the chorismate pathway, which leads to the biosynthesis of aromatic amino acids. Catalyzes the cis-dehydration of 3-dehydroquinate (DHQ) and introduces the first double bond of the aromatic ring to yield 3-dehydroshikimate. The sequence is that of 3-dehydroquinate dehydratase from Geobacillus sp. (strain WCH70).